The chain runs to 43 residues: uncharacterized protein (43 aa).

Residues 13-43 form a disordered region; that stretch reads QLPRLSRPRQSHLPAQTPQPRLSYPKTRRQI.

This is an uncharacterized protein from Clover yellow mosaic virus (CYMV).